A 517-amino-acid chain; its full sequence is T-complex protein 11-like protein 2 (517 aa).

The interval M1–G59 is disordered. Residue S16 is modified to Phosphoserine. Low complexity predominate over residues S36–S55.

This sequence belongs to the TCP11 family. As to quaternary structure, interacts with FMNL2; this interaction promotes muscle-derived satellite cell (MDSC) migration and differentiation.

The protein localises to the cytoplasm. It localises to the cytoskeleton. Its function is as follows. Promotes the migration of muscle-derived satellite cells (MDSCs) during differentiation throught interaction with FMNL2 and therefore may participate in microfilament assembly. The protein is T-complex protein 11-like protein 2 of Mus musculus (Mouse).